A 484-amino-acid polypeptide reads, in one-letter code: Adenylyltransferase and sulfurtransferase uba4 (484 aa).

Positions 39 to 49 are enriched in low complexity; that stretch reads AKAQSAAATTA. A disordered region spans residues 39-58; sequence AKAQSAAATTAGDNHDKPRR. ATP-binding positions include G98, D119, 126-130, K143, and 187-188; these read SNLHR and DN. Positions 236 and 239 each coordinate Zn(2+). C253 acts as the Glycyl thioester intermediate; for adenylyltransferase activity in catalysis. Zn(2+) is bound by residues C313 and C316. The region spanning 370–482 is the Rhodanese domain; the sequence is PEKTPTLIDV…WREQVDPEWP (113 aa). C437 functions as the Cysteine persulfide intermediate; for sulfurtransferase activity in the catalytic mechanism.

The protein in the N-terminal section; belongs to the HesA/MoeB/ThiF family. UBA4 subfamily. Zn(2+) is required as a cofactor.

It localises to the cytoplasm. The protein localises to the cytosol. It catalyses the reaction [molybdopterin-synthase sulfur-carrier protein]-C-terminal Gly-Gly + ATP + H(+) = [molybdopterin-synthase sulfur-carrier protein]-C-terminal Gly-Gly-AMP + diphosphate. The catalysed reaction is [molybdopterin-synthase sulfur-carrier protein]-C-terminal Gly-Gly-AMP + S-sulfanyl-L-cysteinyl-[cysteine desulfurase] + AH2 = [molybdopterin-synthase sulfur-carrier protein]-C-terminal-Gly-aminoethanethioate + L-cysteinyl-[cysteine desulfurase] + A + AMP + 2 H(+). The protein operates within tRNA modification; 5-methoxycarbonylmethyl-2-thiouridine-tRNA biosynthesis. It functions in the pathway cofactor biosynthesis; molybdopterin biosynthesis. In terms of biological role, plays a central role in 2-thiolation of mcm(5)S(2)U at tRNA wobble positions of cytosolic tRNA(Lys), tRNA(Glu) and tRNA(Gln). Also essential during biosynthesis of the molybdenum cofactor. Acts by mediating the C-terminal thiocarboxylation of sulfur carriers urm1 and mocs2a. Its N-terminus first activates urm1 and mocs2a as acyl-adenylates (-COAMP), then the persulfide sulfur on the catalytic cysteine is transferred to urm1 and mocs2a to form thiocarboxylation (-COSH) of their C-terminus. The reaction probably involves hydrogen sulfide that is generated from the persulfide intermediate and that acts as a nucleophile towards urm1 and mocs2a. Subsequently, a transient disulfide bond is formed. Does not use thiosulfate as sulfur donor; nfs1 probably acting as a sulfur donor for thiocarboxylation reactions. This Aspergillus terreus (strain NIH 2624 / FGSC A1156) protein is Adenylyltransferase and sulfurtransferase uba4.